The following is a 146-amino-acid chain: Large ribosomal subunit protein uL15 (146 aa).

Basic and acidic residues predominate over residues 1 to 13; that stretch reads MKLHELKPAEGSR. The disordered stretch occupies residues 1 to 65; it reads MKLHELKPAE…PLYRRLPKRG (65 aa). Gly residues-rich tracts occupy residues 21 to 31 and 42 to 52; these read RGIGSGNGKTA and SGGGVRPGFEG.

The protein belongs to the universal ribosomal protein uL15 family. As to quaternary structure, part of the 50S ribosomal subunit.

In terms of biological role, binds to the 23S rRNA. In Halalkalibacterium halodurans (strain ATCC BAA-125 / DSM 18197 / FERM 7344 / JCM 9153 / C-125) (Bacillus halodurans), this protein is Large ribosomal subunit protein uL15.